A 312-amino-acid chain; its full sequence is Borealin-2 (312 aa).

Positions 1 to 10 (MPPRKAPAKR) are enriched in basic residues. Positions 1–26 (MPPRKAPAKRRSTDSGVERDRGALSQ) are disordered. Residues 11–26 (RSTDSGVERDRGALSQ) are compositionally biased toward basic and acidic residues.

It belongs to the borealin family. In terms of assembly, component of the CPC complex.

It is found in the nucleus. Its subcellular location is the chromosome. It localises to the centromere. Functionally, component of the chromosomal passenger complex (CPC), a complex that acts as a key regulator of mitosis. The CPC complex has essential functions at the centromere in ensuring correct chromosome alignment and segregation and is required for chromatin-induced microtubule stabilization and spindle assembly. The protein is Borealin-2 of Gallus gallus (Chicken).